The chain runs to 639 residues: Transcription factor phomR (639 aa).

Residues 14–41 (CWTCRLRRKKCNEGGPPCDNCEARGIHC) constitute a DNA-binding region (zn(2)-C6 fungal-type). Disordered stretches follow at residues 58–136 (REEA…AGTG) and 476–499 (LPRS…TGPE). Positions 68 to 108 (SGRGRSYSRSSSTAAAAAPKPAEGAMVTGGSSSSSRGSGSS) are enriched in low complexity.

Its subcellular location is the nucleus. Functionally, transcription factor; part of the gene cluster that mediates the biosynthesis of the phomopsins, a group of hexapeptide mycotoxins which infects lupins and causes lupinosis disease in livestock. May play a role in the regulation of the production of phomopsins. The sequence is that of Transcription factor phomR from Diaporthe leptostromiformis (Lupinosis disease fungus).